Reading from the N-terminus, the 81-residue chain is MAHSVKVYDTCIGCTQCVRACPCDVLEMVPWDGCKAKQIASAPRTEDCIGCKRCETACPTDFLSVRVYLGAETTRSMGLAY.

2 consecutive 4Fe-4S ferredoxin-type domains span residues 2 to 31 (AHSV…MVPW) and 39 to 68 (IASA…VRVY). [4Fe-4S] cluster is bound by residues cysteine 11, cysteine 14, cysteine 17, cysteine 21, cysteine 48, cysteine 51, cysteine 54, and cysteine 58.

As to quaternary structure, the eukaryotic PSI reaction center is composed of at least 11 subunits. [4Fe-4S] cluster serves as cofactor.

It is found in the plastid. The protein resides in the chloroplast thylakoid membrane. The enzyme catalyses reduced [plastocyanin] + hnu + oxidized [2Fe-2S]-[ferredoxin] = oxidized [plastocyanin] + reduced [2Fe-2S]-[ferredoxin]. Its function is as follows. Apoprotein for the two 4Fe-4S centers FA and FB of photosystem I (PSI); essential for photochemical activity. FB is the terminal electron acceptor of PSI, donating electrons to ferredoxin. The C-terminus interacts with PsaA/B/D and helps assemble the protein into the PSI complex. Required for binding of PsaD and PsaE to PSI. PSI is a plastocyanin/cytochrome c6-ferredoxin oxidoreductase, converting photonic excitation into a charge separation, which transfers an electron from the donor P700 chlorophyll pair to the spectroscopically characterized acceptors A0, A1, FX, FA and FB in turn. In Pyropia yezoensis (Susabi-nori), this protein is Photosystem I iron-sulfur center.